A 395-amino-acid chain; its full sequence is Sensor protein DltS (395 aa).

The next 2 membrane-spanning stretches (helical) occupy residues 9–29 (FVFLTMSILIVVVLFLFAVSN) and 136–156 (FLILVFTIFGFCLLAAVSLYL). A Histidine kinase domain is found at 177–387 (DASHELKTPI…RLEVQLPIDG (211 aa)). The residue at position 180 (H180) is a Phosphohistidine; by autocatalysis.

The protein resides in the cell membrane. It carries out the reaction ATP + protein L-histidine = ADP + protein N-phospho-L-histidine.. Its function is as follows. Member of the two-component regulatory system DltS/DltR. Regulates the expression of the dlt operon. Probably phosphorylates DltR. The polypeptide is Sensor protein DltS (dltS) (Streptococcus agalactiae serotype V (strain ATCC BAA-611 / 2603 V/R)).